The sequence spans 296 residues: 33 kDa chaperonin (296 aa).

Cystine bridges form between C238–C240 and C271–C274.

This sequence belongs to the HSP33 family. In terms of processing, under oxidizing conditions two disulfide bonds are formed involving the reactive cysteines. Under reducing conditions zinc is bound to the reactive cysteines and the protein is inactive.

It is found in the cytoplasm. Functionally, redox regulated molecular chaperone. Protects both thermally unfolding and oxidatively damaged proteins from irreversible aggregation. Plays an important role in the bacterial defense system toward oxidative stress. This chain is 33 kDa chaperonin, found in Clostridium botulinum (strain Loch Maree / Type A3).